The following is a 732-amino-acid chain: Sesterbrasiliatriene synthase PbSS (732 aa).

The segment at 1 to 342 (MDFLSGAFHY…SRYHRDDLIT (342 aa)) is terpene cyclase. Mg(2+) contacts are provided by aspartate 105 and aspartate 109. Substrate contacts are provided by residues aspartate 105, aspartate 109, 193–196 (RLSE), 242–246 (FNKEF), and 334–335 (RY). Residues 105-109 (DDVTD) carry the DDXXD 1 motif. An NSE/DTE motif is present at residues 238-246 (DYYSFNKEF). A prenyltransferase region spans residues 343 to 732 (TAGDRAMIVG…ARILLLGLGL (390 aa)). Disordered stretches follow at residues 371 to 390 (KSAT…WSDS) and 398 to 420 (ACYT…HKAN). Basic and acidic residues predominate over residues 411–420 (NGTEAGHKAN). Isopentenyl diphosphate-binding residues include lysine 453, arginine 456, and histidine 485. Positions 492 and 496 each coordinate Mg(2+). A DDXXD 2 motif is present at residues 492 to 496 (DDIED). A dimethylallyl diphosphate-binding site is contributed by arginine 501. Arginine 502 contributes to the isopentenyl diphosphate binding site. Dimethylallyl diphosphate is bound by residues lysine 579, threonine 580, glutamine 615, asparagine 622, lysine 632, and lysine 642.

In the N-terminal section; belongs to the terpene synthase family. The protein in the C-terminal section; belongs to the FPP/GGPP synthase family. In terms of assembly, hexamer. The cofactor is Mg(2+).

It carries out the reaction isopentenyl diphosphate + (2E,6E)-farnesyl diphosphate = (2E,6E,10E)-geranylgeranyl diphosphate + diphosphate. The catalysed reaction is isopentenyl diphosphate + (2E,6E,10E)-geranylgeranyl diphosphate = (2E,6E,10E,14E)-geranylfarnesyl diphosphate + diphosphate. It functions in the pathway secondary metabolite biosynthesis; terpenoid biosynthesis. In terms of biological role, bifunctional sesterterpene synthase that possesses both prenyl transferase and terpene cyclase activity, converting isopentenyl diphosphate and dimethylallyl diphosphate into geranylfarnesyl diphosphate (GFPP) and further converting GFPP into sesterbrasiliatriene. The chain is Sesterbrasiliatriene synthase PbSS (PbSS) from Penicillium brasilianum.